Reading from the N-terminus, the 121-residue chain is Large ribosomal subunit protein bL12 (121 aa).

It belongs to the bacterial ribosomal protein bL12 family. In terms of assembly, homodimer. Part of the ribosomal stalk of the 50S ribosomal subunit. Forms a multimeric L10(L12)X complex, where L10 forms an elongated spine to which 2 to 4 L12 dimers bind in a sequential fashion. Binds GTP-bound translation factors.

Functionally, forms part of the ribosomal stalk which helps the ribosome interact with GTP-bound translation factors. Is thus essential for accurate translation. This is Large ribosomal subunit protein bL12 from Baumannia cicadellinicola subsp. Homalodisca coagulata.